Consider the following 343-residue polypeptide: Cytoplasmic tRNA 2-thiolation protein 1 (343 aa).

The protein belongs to the TtcA family. CTU1/NCS6/ATPBD3 subfamily.

The protein localises to the cytoplasm. Its pathway is tRNA modification; 5-methoxycarbonylmethyl-2-thiouridine-tRNA biosynthesis. Plays a central role in 2-thiolation of mcm(5)S(2)U at tRNA wobble positions of tRNA(Lys), tRNA(Glu) and tRNA(Gln). Directly binds tRNAs and probably acts by catalyzing adenylation of tRNAs, an intermediate required for 2-thiolation. It is unclear whether it acts as a sulfurtransferase that transfers sulfur from thiocarboxylated URM1 onto the uridine of tRNAs at wobble position. The chain is Cytoplasmic tRNA 2-thiolation protein 1 from Drosophila melanogaster (Fruit fly).